We begin with the raw amino-acid sequence, 218 residues long: Small ribosomal subunit protein uS3 (218 aa).

Residues 38–106 (IREFISKRLS…RVHINILEIK (69 aa)) enclose the KH type-2 domain.

It belongs to the universal ribosomal protein uS3 family. As to quaternary structure, part of the 30S ribosomal subunit. Forms a tight complex with proteins S10 and S14.

In terms of biological role, binds the lower part of the 30S subunit head. Binds mRNA in the 70S ribosome, positioning it for translation. This Bacillus pumilus (strain SAFR-032) protein is Small ribosomal subunit protein uS3.